A 414-amino-acid chain; its full sequence is Histidine--tRNA ligase (414 aa).

Belongs to the class-II aminoacyl-tRNA synthetase family. Homodimer.

It localises to the cytoplasm. It catalyses the reaction tRNA(His) + L-histidine + ATP = L-histidyl-tRNA(His) + AMP + diphosphate + H(+). The chain is Histidine--tRNA ligase from Ehrlichia ruminantium (strain Welgevonden).